Consider the following 467-residue polypeptide: Glutamate--tRNA ligase 1 (467 aa).

Residues 8–18 (PSPTGHLHVGG) carry the 'HIGH' region motif. Positions 230–234 (PLSKR) match the 'KMSKS' region motif. Position 233 (K233) interacts with ATP.

This sequence belongs to the class-I aminoacyl-tRNA synthetase family. Glutamate--tRNA ligase type 1 subfamily. Monomer.

Its subcellular location is the cytoplasm. The catalysed reaction is tRNA(Glu) + L-glutamate + ATP = L-glutamyl-tRNA(Glu) + AMP + diphosphate. Catalyzes the attachment of glutamate to tRNA(Glu) in a two-step reaction: glutamate is first activated by ATP to form Glu-AMP and then transferred to the acceptor end of tRNA(Glu). This is Glutamate--tRNA ligase 1 from Petrotoga mobilis (strain DSM 10674 / SJ95).